A 153-amino-acid chain; its full sequence is Transthyretin (153 aa).

The first 24 residues, 1–24 (MAYYNTLALLTIFIFSGAFHRAQG), serve as a signal peptide directing secretion. The residue at position 33 (cysteine 33) is a Sulfocysteine. The L-thyroxine site is built by lysine 38, glutamate 77, and serine 140.

Belongs to the transthyretin family. As to quaternary structure, homotetramer. Dimer of dimers. In the homotetramer, subunits assemble around a central channel that can accommodate two ligand molecules. Interacts with RBP4. Post-translationally, sulfonation of the reactive cysteine Cys-33 enhances the stability of the native conformation of TTR, avoiding misassembly of the protein leading to amyloid formation. In terms of tissue distribution, detected in plasma (at protein level). Expressed during metamorphosis in tadpole liver but not in tadpole brain, nor adult liver.

The protein resides in the secreted. Its function is as follows. Thyroid hormone-binding protein, with a much higher binding affinity for triiodothyronine (T3) than for thyroxine (T4). Probably transports triiodothyronine from the bloodstream to the brain. This Aquarana catesbeiana (American bullfrog) protein is Transthyretin.